A 98-amino-acid polypeptide reads, in one-letter code: Large ribosomal subunit protein uL23 (98 aa).

It belongs to the universal ribosomal protein uL23 family. In terms of assembly, part of the 50S ribosomal subunit. Contacts protein L29, and trigger factor when it is bound to the ribosome.

In terms of biological role, one of the early assembly proteins it binds 23S rRNA. One of the proteins that surrounds the polypeptide exit tunnel on the outside of the ribosome. Forms the main docking site for trigger factor binding to the ribosome. The sequence is that of Large ribosomal subunit protein uL23 from Rickettsia rickettsii (strain Iowa).